Consider the following 90-residue polypeptide: Small ribosomal subunit protein bS16 (90 aa).

This sequence belongs to the bacterial ribosomal protein bS16 family.

The sequence is that of Small ribosomal subunit protein bS16 from Lactococcus lactis subsp. lactis (strain IL1403) (Streptococcus lactis).